The primary structure comprises 193 residues: Xanthine phosphoribosyltransferase (193 aa).

Xanthine contacts are provided by Leu20 and Thr27. A 5-phospho-alpha-D-ribose 1-diphosphate-binding site is contributed by 128-132; sequence ANGQA. Lys156 lines the xanthine pocket.

This sequence belongs to the purine/pyrimidine phosphoribosyltransferase family. Xpt subfamily. Homodimer.

It localises to the cytoplasm. It carries out the reaction XMP + diphosphate = xanthine + 5-phospho-alpha-D-ribose 1-diphosphate. The protein operates within purine metabolism; XMP biosynthesis via salvage pathway; XMP from xanthine: step 1/1. Functionally, converts the preformed base xanthine, a product of nucleic acid breakdown, to xanthosine 5'-monophosphate (XMP), so it can be reused for RNA or DNA synthesis. In Streptococcus gordonii (strain Challis / ATCC 35105 / BCRC 15272 / CH1 / DL1 / V288), this protein is Xanthine phosphoribosyltransferase.